We begin with the raw amino-acid sequence, 302 residues long: Homoserine O-acetyltransferase (302 aa).

Catalysis depends on cysteine 142, which acts as the Acyl-thioester intermediate. Positions 163 and 192 each coordinate substrate. Histidine 235 serves as the catalytic Proton acceptor. Glutamate 237 is an active-site residue. Residue arginine 249 participates in substrate binding.

It belongs to the MetA family.

The protein localises to the cytoplasm. It catalyses the reaction L-homoserine + acetyl-CoA = O-acetyl-L-homoserine + CoA. It participates in amino-acid biosynthesis; L-methionine biosynthesis via de novo pathway; O-acetyl-L-homoserine from L-homoserine: step 1/1. In terms of biological role, transfers an acetyl group from acetyl-CoA to L-homoserine, forming acetyl-L-homoserine. This is Homoserine O-acetyltransferase from Geobacillus kaustophilus (strain HTA426).